The following is a 480-amino-acid chain: Voltage-gated potassium channel regulatory subunit KCNG2 (480 aa).

2 disordered regions span residues 1 to 25 and 144 to 167; these read MARL…GRGG and AAEA…LGSG. Over 1–187 the chain is Cytoplasmic; it reads MARLPGHPEV…DVVENPHSGL (187 aa). A helical transmembrane segment spans residues 188 to 209; it reads AGKLFAYVSVAFVAVTAVGLCL. Over 210–230 the chain is Extracellular; it reads STMPDVRAEEERGECSTKCRN. Residues 231 to 252 form a helical membrane-spanning segment; that stretch reads LFVLETVCVAWFSFEFLLRSLQ. Topologically, residues 253 to 263 are cytoplasmic; it reads AESKCAFLRTP. The helical transmembrane segment at 264–284 threads the bilayer; that stretch reads LAIIDILAILPFYVSLLAGLA. Over 285 to 296 the chain is Extracellular; sequence AGPTGSKMLERA. Residues 297-317 form a helical; Voltage-sensor membrane-spanning segment; the sequence is GLVLRLLRALRVLYVMRLARH. Topologically, residues 318 to 332 are cytoplasmic; the sequence is SLGLRSLGLTVRRCA. The helical transmembrane segment at 333 to 354 threads the bilayer; it reads REFGLLLLFLCVAMALFAPLVH. The Extracellular segment spans residues 355 to 369; that stretch reads LAERELGAHRDFSSV. Positions 370–381 form an intramembrane region, helical; the sequence is PASYWWAVISMT. The short motif at 382–387 is the Selectivity filter element; that stretch reads TVGYGD. The stretch at 382–389 is an intramembrane region; sequence TVGYGDMV. Over 390–396 the chain is Extracellular; the sequence is PRSLPGQ. The chain crosses the membrane as a helical span at residues 397-425; sequence VVALSSILSGILLMAFPVTSIFHTFSRSY. At 426–480 the chain is on the cytoplasmic side; it reads SELKEQQQRAASPEPVLREDSTRDDSTRSASATEDSSQDPETAGAAGSLPGPVGP. Residues 429 to 480 form a disordered region; that stretch reads KEQQQRAASPEPVLREDSTRDDSTRSASATEDSSQDPETAGAAGSLPGPVGP. A compositionally biased stretch (basic and acidic residues) spans 441–452; sequence VLREDSTRDDST.

The protein belongs to the potassium channel family. G (TC 1.A.1.2) subfamily. Kv6.2/KCNG2 sub-subfamily. In terms of assembly, heterodimer with KCNB1. As to expression, highly expressed in heart, in particular in right and left atrium, and detected at lower levels in the right and left ventricle.

It is found in the cell membrane. Its function is as follows. Regulatory alpha-subunit of the voltage-gated potassium (Kv) channel which, when coassembled with KCNB1, can modulate the kinetics and conductance-voltage relationship. Modulates channel activity by shifting the threshold and the half-maximal activation to more negative values. Potassium channel subunit that does not form functional channels by itself. This chain is Voltage-gated potassium channel regulatory subunit KCNG2, found in Rattus norvegicus (Rat).